The following is an 879-amino-acid chain: DNA mismatch repair protein MutS (879 aa).

Position 629–636 (629–636) interacts with ATP; the sequence is GPNMAGKS. The tract at residues 824–845 is disordered; sequence VGGQPQKELSEHKPHQPSLFAP.

It belongs to the DNA mismatch repair MutS family.

In terms of biological role, this protein is involved in the repair of mismatches in DNA. It is possible that it carries out the mismatch recognition step. This protein has a weak ATPase activity. This is DNA mismatch repair protein MutS from Desulfotalea psychrophila (strain LSv54 / DSM 12343).